Here is a 168-residue protein sequence, read N- to C-terminus: S-ribosylhomocysteine lyase (168 aa).

Fe cation is bound by residues histidine 54, histidine 58, and cysteine 128.

The protein belongs to the LuxS family. In terms of assembly, homodimer. The cofactor is Fe cation.

It carries out the reaction S-(5-deoxy-D-ribos-5-yl)-L-homocysteine = (S)-4,5-dihydroxypentane-2,3-dione + L-homocysteine. Functionally, involved in the synthesis of autoinducer 2 (AI-2) which is secreted by bacteria and is used to communicate both the cell density and the metabolic potential of the environment. The regulation of gene expression in response to changes in cell density is called quorum sensing. Catalyzes the transformation of S-ribosylhomocysteine (RHC) to homocysteine (HC) and 4,5-dihydroxy-2,3-pentadione (DPD). The protein is S-ribosylhomocysteine lyase of Neisseria meningitidis serogroup C / serotype 2a (strain ATCC 700532 / DSM 15464 / FAM18).